The primary structure comprises 479 residues: Aspartyl/glutamyl-tRNA(Asn/Gln) amidotransferase subunit B (479 aa).

This sequence belongs to the GatB/GatE family. GatB subfamily. In terms of assembly, heterotrimer of A, B and C subunits.

The catalysed reaction is L-glutamyl-tRNA(Gln) + L-glutamine + ATP + H2O = L-glutaminyl-tRNA(Gln) + L-glutamate + ADP + phosphate + H(+). It carries out the reaction L-aspartyl-tRNA(Asn) + L-glutamine + ATP + H2O = L-asparaginyl-tRNA(Asn) + L-glutamate + ADP + phosphate + 2 H(+). In terms of biological role, allows the formation of correctly charged Asn-tRNA(Asn) or Gln-tRNA(Gln) through the transamidation of misacylated Asp-tRNA(Asn) or Glu-tRNA(Gln) in organisms which lack either or both of asparaginyl-tRNA or glutaminyl-tRNA synthetases. The reaction takes place in the presence of glutamine and ATP through an activated phospho-Asp-tRNA(Asn) or phospho-Glu-tRNA(Gln). This Streptococcus mutans serotype c (strain ATCC 700610 / UA159) protein is Aspartyl/glutamyl-tRNA(Asn/Gln) amidotransferase subunit B.